The following is a 182-amino-acid chain: Tropomyosin-like protein (182 aa).

Residues 1-68 (FDRYNQILDE…ELEQRRTEQQ (68 aa)) adopt a coiled-coil conformation. Residues 32–66 (DEETKKIKQEEAEMKKKIEGEASRKKLELEQRRTE) are compositionally biased toward basic and acidic residues. 2 disordered regions span residues 32–81 (DEET…GSTD) and 140–160 (DQPAQAGPEPAAPAQEDDAGL). The segment covering 140–153 (DQPAQAGPEPAAPA) has biased composition (low complexity).

It localises to the cytoplasm. The protein resides in the cytoskeleton. In Pichia angusta (Yeast), this protein is Tropomyosin-like protein.